The primary structure comprises 414 residues: Argininosuccinate synthase (414 aa).

12–20 provides a ligand contact to ATP; sequence AYSGGLDTS. Residues Tyr-90 and Ser-95 each coordinate L-citrulline. An ATP-binding site is contributed by Gly-120. The L-aspartate site is built by Thr-122, Asn-126, and Asp-127. Asn-126 is an L-citrulline binding site. 5 residues coordinate L-citrulline: Arg-130, Ser-179, Ser-188, Glu-264, and Tyr-276.

The protein belongs to the argininosuccinate synthase family. Type 1 subfamily. As to quaternary structure, homotetramer.

It localises to the cytoplasm. The catalysed reaction is L-citrulline + L-aspartate + ATP = 2-(N(omega)-L-arginino)succinate + AMP + diphosphate + H(+). It participates in amino-acid biosynthesis; L-arginine biosynthesis; L-arginine from L-ornithine and carbamoyl phosphate: step 2/3. This is Argininosuccinate synthase from Alkaliphilus metalliredigens (strain QYMF).